Here is a 305-residue protein sequence, read N- to C-terminus: Fructose-bisphosphate aldolase (305 aa).

Ser-49 serves as a coordination point for D-glyceraldehyde 3-phosphate. The active-site Proton donor is Asp-80. Zn(2+) is bound by residues His-81, Asp-102, Glu-132, and His-178. Gly-179 is a dihydroxyacetone phosphate binding site. His-208 is a binding site for Zn(2+). Residues 209 to 211 (GAS) and 251 to 254 (NTDT) contribute to the dihydroxyacetone phosphate site.

It belongs to the class II fructose-bisphosphate aldolase family. Homotetramer. It depends on Zn(2+) as a cofactor.

The catalysed reaction is beta-D-fructose 1,6-bisphosphate = D-glyceraldehyde 3-phosphate + dihydroxyacetone phosphate. The protein operates within carbohydrate degradation; glycolysis; D-glyceraldehyde 3-phosphate and glycerone phosphate from D-glucose: step 4/4. Functionally, catalyzes the aldol condensation of dihydroxyacetone phosphate (DHAP or glycerone-phosphate) with glyceraldehyde 3-phosphate (G3P) to form fructose 1,6-bisphosphate (FBP) in gluconeogenesis and the reverse reaction in glycolysis. The chain is Fructose-bisphosphate aldolase from Thermus caldophilus.